Consider the following 283-residue polypeptide: Acetylglutamate kinase (283 aa).

Substrate-binding positions include 64–65 (GG), Arg-86, and Asn-178.

Belongs to the acetylglutamate kinase family. ArgB subfamily.

The protein resides in the cytoplasm. The catalysed reaction is N-acetyl-L-glutamate + ATP = N-acetyl-L-glutamyl 5-phosphate + ADP. Its pathway is amino-acid biosynthesis; L-arginine biosynthesis; N(2)-acetyl-L-ornithine from L-glutamate: step 2/4. Its function is as follows. Catalyzes the ATP-dependent phosphorylation of N-acetyl-L-glutamate. This Lactococcus lactis subsp. cremoris (strain MG1363) protein is Acetylglutamate kinase.